The chain runs to 265 residues: 3-methyl-2-oxobutanoate hydroxymethyltransferase (265 aa).

2 residues coordinate Mg(2+): D45 and D84. Residues 45–46, D84, and K112 each bind 3-methyl-2-oxobutanoate; that span reads DS. E114 lines the Mg(2+) pocket. The active-site Proton acceptor is the E181.

The protein belongs to the PanB family. In terms of assembly, homodecamer; pentamer of dimers. Mg(2+) is required as a cofactor.

The protein localises to the cytoplasm. It catalyses the reaction 3-methyl-2-oxobutanoate + (6R)-5,10-methylene-5,6,7,8-tetrahydrofolate + H2O = 2-dehydropantoate + (6S)-5,6,7,8-tetrahydrofolate. The protein operates within cofactor biosynthesis; (R)-pantothenate biosynthesis; (R)-pantoate from 3-methyl-2-oxobutanoate: step 1/2. Its function is as follows. Catalyzes the reversible reaction in which hydroxymethyl group from 5,10-methylenetetrahydrofolate is transferred onto alpha-ketoisovalerate to form ketopantoate. This chain is 3-methyl-2-oxobutanoate hydroxymethyltransferase, found in Yersinia pseudotuberculosis serotype IB (strain PB1/+).